Here is a 122-residue protein sequence, read N- to C-terminus: Phosphoribosyl-ATP pyrophosphatase (122 aa).

This sequence belongs to the PRA-PH family.

It localises to the cytoplasm. It carries out the reaction 1-(5-phospho-beta-D-ribosyl)-ATP + H2O = 1-(5-phospho-beta-D-ribosyl)-5'-AMP + diphosphate + H(+). Its pathway is amino-acid biosynthesis; L-histidine biosynthesis; L-histidine from 5-phospho-alpha-D-ribose 1-diphosphate: step 2/9. This is Phosphoribosyl-ATP pyrophosphatase from Burkholderia mallei (strain NCTC 10247).